Reading from the N-terminus, the 72-residue chain is Translation initiation factor IF-1 (72 aa).

The region spanning 1-72 (MAKEELLEFP…TKGRINYRFK (72 aa)) is the S1-like domain.

This sequence belongs to the IF-1 family. Component of the 30S ribosomal translation pre-initiation complex which assembles on the 30S ribosome in the order IF-2 and IF-3, IF-1 and N-formylmethionyl-tRNA(fMet); mRNA recruitment can occur at any time during PIC assembly.

The protein resides in the cytoplasm. In terms of biological role, one of the essential components for the initiation of protein synthesis. Stabilizes the binding of IF-2 and IF-3 on the 30S subunit to which N-formylmethionyl-tRNA(fMet) subsequently binds. Helps modulate mRNA selection, yielding the 30S pre-initiation complex (PIC). Upon addition of the 50S ribosomal subunit IF-1, IF-2 and IF-3 are released leaving the mature 70S translation initiation complex. The protein is Translation initiation factor IF-1 of Dinoroseobacter shibae (strain DSM 16493 / NCIMB 14021 / DFL 12).